The primary structure comprises 466 residues: Phytase A (466 aa).

The N-terminal stretch at 1–19 (MGFLAIVLSVALLFRSTSG) is a signal peptide. The cysteines at positions 31 and 40 are disulfide-linked. 1D-myo-inositol hexakisphosphate-binding residues include Y51, R81, H82, R85, and T88. 4 disulfide bridges follow: C71–C414, C215–C465, C264–C282, and C436–C444. H82 functions as the Nucleophile in the catalytic mechanism. N-linked (GlcNAc...) asparagine glycosylation is present at N120. 1D-myo-inositol hexakisphosphate is bound at residue R165. 2 N-linked (GlcNAc...) asparagine glycosylation sites follow: N207 and N230. K301 lines the 1D-myo-inositol hexakisphosphate pocket. 2 N-linked (GlcNAc...) asparagine glycosylation sites follow: N339 and N352. 1D-myo-inositol hexakisphosphate is bound by residues H361 and D362. An N-linked (GlcNAc...) asparagine glycan is attached at N376.

Belongs to the histidine acid phosphatase family. As to quaternary structure, monomer.

It localises to the secreted. The enzyme catalyses 1D-myo-inositol hexakisphosphate + H2O = 1D-myo-inositol 1,2,4,5,6-pentakisphosphate + phosphate. It carries out the reaction 1D-myo-inositol 1,2,4,5,6-pentakisphosphate + H2O = 1D-myo-inositol 1,2,5,6-tetrakisphosphate + phosphate. The catalysed reaction is 1D-myo-inositol 1,2,5,6-tetrakisphosphate + H2O = 1D-myo-inositol 1,2,6-trisphosphate + phosphate. It catalyses the reaction 1D-myo-inositol 1,2,6-trisphosphate + H2O = 1D-myo-inositol 1,2-bisphosphate + phosphate. The enzyme catalyses 1D-myo-inositol 1,2-bisphosphate + H2O = 1D-myo-inositol 2-phosphate + phosphate. In terms of biological role, catalyzes the phosphate monoester hydrolysis of phytic acid (myo-inositol hexakisphosphate), which results in the stepwise formation of myo-inositol pentakis-, tetrakis-, tris-, bis-, and monophosphates, as well as the liberation of inorganic phosphate. Myo-inositol 2-monophosphate is the end product. Has a broad substrate specificity and is also able to dephosphorylate other classic acid phosphatase substrates such as p-nitrophenyl phosphate, phenyl phosphate, fructose 1,6-bisphosphate, glucose 6-phosphate, 3-phosphoglycerate, as well as ADP and ATP. This Aspergillus terreus protein is Phytase A.